The following is a 600-amino-acid chain: Alpha-N-acetylgalactosaminide alpha-2,6-sialyltransferase 1 (600 aa).

At 1-14 (MRSCLWRCRHLSQG) the chain is on the cytoplasmic side. A helical; Signal-anchor for type II membrane protein transmembrane segment spans residues 15–35 (VQWSLLLAVLVFFLFALPSFI). Residues 36 to 600 (KEPQTKPSRH…PGPGTAKAKN (565 aa)) are Lumenal-facing. 2 disordered regions span residues 38-191 (PQTK…AATT) and 208-248 (GAVS…TQRN). Residues 46–55 (QRTENIKERS) are compositionally biased toward basic and acidic residues. Polar residues-rich tracts occupy residues 84–94 (NALNTQTQPKA), 151–179 (TEAQ…ASRT), and 209–219 (AVSTRTRQKGV). 2 disulfide bridges follow: Cys279–Cys362 and Cys365–Cys533. 5 N-linked (GlcNAc...) asparagine glycosylation sites follow: Asn300, Asn311, Asn331, Asn375, and Asn460.

It belongs to the glycosyltransferase 29 family. In terms of processing, glycosylated; autosialylated. Expression is restricted to the gastrointestinal tract. Highly expressed in goblet cells. Also expressed in various tumor cells.

It localises to the golgi apparatus membrane. It catalyses the reaction a beta-D-galactosyl-(1-&gt;3)-N-acetyl-alpha-D-galactosaminyl derivative + CMP-N-acetyl-beta-neuraminate = a beta-D-galactosyl-(1-&gt;3)-[N-acetyl-alpha-neuraminyl-(2-&gt;6)]-N-acetyl-alpha-D-galactosaminyl derivative + CMP + H(+). The enzyme catalyses a 3-O-[N-acetyl-alpha-D-galactosaminyl]-L-seryl-[protein] + CMP-N-acetyl-beta-neuraminate = a 3-O-[N-acetyl-alpha-neuraminosyl-(2-&gt;6)-N-acetyl-alpha-D-galactosaminyl]-L-seryl-[protein] + CMP + H(+). The catalysed reaction is a 3-O-[N-acetyl-alpha-D-galactosaminyl]-L-threonyl-[protein] + CMP-N-acetyl-beta-neuraminate = a 3-O-[N-acetyl-alpha-neuraminosyl-(2-&gt;6)-N-acetyl-alpha-D-galactosaminyl]-L-threonyl-[protein] + CMP + H(+). It carries out the reaction a 3-O-[beta-D-galactosyl-(1-&gt;3)-N-acetyl-alpha-D-galactosaminyl]-L-seryl-[protein] + CMP-N-acetyl-beta-neuraminate = a 3-O-{beta-D-galactosyl-(1-&gt;3)-[N-acetyl-alpha-neuraminosyl-(2-&gt;6)]-N-acetyl-alpha-D-galactosaminyl}-L-seryl-[protein] + CMP + H(+). It catalyses the reaction a 3-O-[beta-D-galactosyl-(1-&gt;3)-N-acetyl-alpha-D-galactosaminyl]-L-threonyl-[protein] + CMP-N-acetyl-beta-neuraminate = a 3-O-{beta-D-galactosyl-(1-&gt;3)-[N-acetyl-alpha-neuraminosyl-(2-&gt;6)]-N-acetyl-alpha-D-galactosaminyl}-L-threonyl-[protein] + CMP + H(+). The enzyme catalyses a 3-O-[N-acetyl-alpha-neuraminyl-(2-&gt;3)-beta-D-galactosyl-(1-&gt;3)-N-acetyl-alpha-D-galactosaminyl]-L-threonyl-[protein] + CMP-N-acetyl-beta-neuraminate = a 3-O-{alpha-Neu5Ac-(2-&gt;3)-beta-D-Gal-(1-&gt;3)-[alpha-Neu5Ac-(2-&gt;6)]-alpha-D-GalNAc}-L-threonyl-[protein] + CMP + H(+). Its pathway is protein modification; protein glycosylation. Functionally, protein sialyltransferase specifically expressed in goblet cells that plays a key role in intestinal host-commensal homeostasis. Conjugates sialic acid with an alpha-2-6 linkage to N-acetylgalactosamine (GalNAc) glycan chains linked to serine or threonine in glycoproteins. Catalyzes the formation of the sialyl-Tn (S-Tn) antigen, an antigen found in intestinal goblet cells, as well as ulcerative colitis (UC) and various cancers. Protein sialylation in globlet cells is essential for mucus integrity and is required to protect the intestinal mucus against excessive bacterial proteolytic degradation. This Homo sapiens (Human) protein is Alpha-N-acetylgalactosaminide alpha-2,6-sialyltransferase 1.